Reading from the N-terminus, the 228-residue chain is Probable septum site-determining protein MinC (228 aa).

It belongs to the MinC family. As to quaternary structure, interacts with MinD and FtsZ.

Functionally, cell division inhibitor that blocks the formation of polar Z ring septums. Rapidly oscillates between the poles of the cell to destabilize FtsZ filaments that have formed before they mature into polar Z rings. Prevents FtsZ polymerization. The protein is Probable septum site-determining protein MinC of Bacillus mycoides (strain KBAB4) (Bacillus weihenstephanensis).